The primary structure comprises 35 residues: GFGSLFKFLAKKVAKTVAKQAAKQGAKYVANKHME.

Position 35 is a glutamic acid 1-amide (glutamate 35).

Belongs to the cationic peptide 04 (cupiennin) family. 01 subfamily. Expressed by the venom gland.

It localises to the secreted. Its function is as follows. Has antimicrobial activity against B.subtilis, E.coli, E.faecalis, P.aeruginosa, and S.aureus. Has insecticidal and hemolytic activities. Probably acts by disturbing membrane function with its amphipathic structure. This chain is Cupiennin-1d, found in Cupiennius salei (American wandering spider).